A 213-amino-acid polypeptide reads, in one-letter code: Peptidyl-tRNA hydrolase (213 aa).

A tRNA-binding site is contributed by Y15. H20 serves as the catalytic Proton acceptor. TRNA contacts are provided by Y66, N68, and N114. Residues 186 to 213 (MHAKPPRPKPPRPVTAPGAPVPPTEPSA) form a disordered region. Pro residues predominate over residues 196 to 213 (PRPVTAPGAPVPPTEPSA).

This sequence belongs to the PTH family. In terms of assembly, monomer.

Its subcellular location is the cytoplasm. It carries out the reaction an N-acyl-L-alpha-aminoacyl-tRNA + H2O = an N-acyl-L-amino acid + a tRNA + H(+). Functionally, hydrolyzes ribosome-free peptidyl-tRNAs (with 1 or more amino acids incorporated), which drop off the ribosome during protein synthesis, or as a result of ribosome stalling. Its function is as follows. Catalyzes the release of premature peptidyl moieties from peptidyl-tRNA molecules trapped in stalled 50S ribosomal subunits, and thus maintains levels of free tRNAs and 50S ribosomes. The chain is Peptidyl-tRNA hydrolase from Leptothrix cholodnii (strain ATCC 51168 / LMG 8142 / SP-6) (Leptothrix discophora (strain SP-6)).